A 1066-amino-acid polypeptide reads, in one-letter code: Allene oxide synthase-lipoxygenase protein (1066 aa).

An allene oxide synthase region spans residues 1–371 (MTWKNFGFEI…LKIGSLVPAG (371 aa)). Tyrosine 353 lines the heme pocket. The interval 372-1066 (QNAIYNVEVE…PERIPNGTAI (695 aa)) is arachidonate 8-lipoxygenase. Residues 374–490 (AIYNVEVETG…KDMVLFPGEA (117 aa)) form the PLAT domain. Positions 387, 389, 390, 391, 416, 417, 419, 452, and 454 each coordinate Ca(2+). Residues 491-1066 (TLPFNEVPAI…PERIPNGTAI (576 aa)) form the Lipoxygenase domain. Fe cation-binding residues include histidine 757, histidine 762, histidine 943, asparagine 947, and isoleucine 1066.

It in the C-terminal section; belongs to the lipoxygenase family. Dimer. It depends on Ca(2+) as a cofactor. Fe cation is required as a cofactor. Heme serves as cofactor.

It localises to the cytoplasm. The protein localises to the membrane. The catalysed reaction is (5Z,8Z,11Z,14Z)-eicosatetraenoate + O2 = (8R)-hydroperoxy-(5Z,9E,11Z,14Z)-eicosatetraenoate. It carries out the reaction (8R)-hydroperoxy-(5Z,9E,11Z,14Z)-eicosatetraenoate = 8,9-epoxy-(5Z,9E,11Z,14Z)-eicosatetraenoate + H2O. It catalyses the reaction (5Z,8Z,11Z,14Z,17Z)-eicosapentaenoate + O2 = (8R)-hydroperoxy-(5Z,9E,11Z,14Z,17Z)-eicosapentaenoate. The enzyme catalyses (4Z,7Z,10Z,13Z,16Z,19Z)-docosahexaenoate + O2 = 10-hydroperoxy-(4Z,7Z,11E,13Z,16Z,19Z)-docosahexaenoate. The catalysed reaction is (8Z,11Z,14Z)-eicosatrienoate + O2 = (8R)-hydroperoxy-(9E,11Z,14Z)-eicosatrienoate. It carries out the reaction (8Z,11Z,14Z)-eicosatrienoate + O2 = 10-hydroperoxy-(8Z,11Z,14Z)-eicosatrienoate. It catalyses the reaction (8Z,11Z,14Z)-eicosatrienoate + O2 = 11-hydroperoxy-(8Z,12E,14Z)-eicosatrienoate. It functions in the pathway lipid metabolism; arachidonate metabolism. The protein operates within lipid metabolism; fatty acid metabolism. With respect to regulation, lipoxygenase activity is stimulated by calcium, sodium, lithium and potassium ions. Calcium binding promotes interaction with membranes and thus facilitates access to substrates. Bifunctional enzyme which is responsible for allene oxide biosynthesis via a two-step reaction; first the lipoxygenase reaction that converts polyunsaturated fatty acids such as arachidonate ((5Z,8Z,11Z,14Z)-eicosatetraenoate) into a (8R)-hydroperoxide intermediate ((8R)-hydroperoxy-(5Z,9E,11Z,14Z)-eicosatetraenoate) followed by the allene oxide synthase reaction that converts the hydroperoxide intermediate ((8R)-hydroperoxy-(5Z,9E,11Z,14Z)-eicosatetraenoate) into the allene oxide (8,9-epoxy-(5Z,9E,11Z,14Z)-eicosatetraenoate). Shows preference for C20 or C22 highly polyunsaturated fatty acids and no activity with C18 fatty acids in vitro. Fatty acid allene oxides are intermediates in the formation of cyclopentenones or hydrolytic products in marine systems, most notably the prostanoid-related clavulones. This is Allene oxide synthase-lipoxygenase protein from Plexaura homomalla (Black sea rod).